Consider the following 349-residue polypeptide: Phosphoribosylformylglycinamidine cyclo-ligase (349 aa).

The protein belongs to the AIR synthase family.

Its subcellular location is the cytoplasm. The catalysed reaction is 2-formamido-N(1)-(5-O-phospho-beta-D-ribosyl)acetamidine + ATP = 5-amino-1-(5-phospho-beta-D-ribosyl)imidazole + ADP + phosphate + H(+). It functions in the pathway purine metabolism; IMP biosynthesis via de novo pathway; 5-amino-1-(5-phospho-D-ribosyl)imidazole from N(2)-formyl-N(1)-(5-phospho-D-ribosyl)glycinamide: step 2/2. This Bordetella parapertussis (strain 12822 / ATCC BAA-587 / NCTC 13253) protein is Phosphoribosylformylglycinamidine cyclo-ligase.